Here is a 328-residue protein sequence, read N- to C-terminus: Biotin synthase (328 aa).

Residues 42 to 267 (YHVQLASLLS…LMPGSRVRLS (226 aa)) enclose the Radical SAM core domain. Residues Cys57, Cys61, and Cys64 each coordinate [4Fe-4S] cluster. [2Fe-2S] cluster-binding residues include Cys101, Cys133, Cys193, and Arg265.

This sequence belongs to the radical SAM superfamily. Biotin synthase family. As to quaternary structure, homodimer. [4Fe-4S] cluster is required as a cofactor. It depends on [2Fe-2S] cluster as a cofactor.

It carries out the reaction (4R,5S)-dethiobiotin + (sulfur carrier)-SH + 2 reduced [2Fe-2S]-[ferredoxin] + 2 S-adenosyl-L-methionine = (sulfur carrier)-H + biotin + 2 5'-deoxyadenosine + 2 L-methionine + 2 oxidized [2Fe-2S]-[ferredoxin]. It participates in cofactor biosynthesis; biotin biosynthesis; biotin from 7,8-diaminononanoate: step 2/2. Catalyzes the conversion of dethiobiotin (DTB) to biotin by the insertion of a sulfur atom into dethiobiotin via a radical-based mechanism. The protein is Biotin synthase of Synechococcus sp. (strain CC9311).